Consider the following 567-residue polypeptide: Multidrug transporter TPO1_1 (567 aa).

Residues 1 to 71 are disordered; the sequence is MVEEISPKYT…NRRMSRILTG (71 aa). An N-linked (GlcNAc...) asparagine glycan is attached at asparagine 120. The next 12 helical transmembrane spans lie at 128-148, 157-177, 194-214, 224-244, 253-273, 283-303, 358-378, 396-416, 436-456, 471-491, 498-520, and 531-551; these read IICI…SIFA, IYHV…FGFA, GVLV…ATSK, FFGG…FADM, AICL…VMGS, WLEY…ALTF, PLLL…YLML, ELPY…LWYF, LIPM…FCWT, AGSF…NYII, AASA…PLFA, and WAGL…LFFL.

Belongs to the major facilitator superfamily. DHA1 family. Polyamines/proton antiporter (TC 2.A.1.2.16) subfamily.

The protein localises to the cell membrane. In terms of biological role, multidrug resistance transporter involved in resistance to azole antifungal drugs such as the imidazoles miconazole, ketoconazole, and tioconazole; as well as the triazoles itraconazole and fluconazole. Also plays a role in the resistance to other antifungal drug families such as the polyene amphotericin B, the pyrimide analog flucytosine, the fungicide mancozeb, and the polyamine spermine. Decreases the intracellular accumulation of clotrimazole by mediating its extrusion from cells. Involved in virulence by conferring resistance to the human antimicrobial peptide histatin-5. The protein is Multidrug transporter TPO1_1 of Candida glabrata (strain ATCC 2001 / BCRC 20586 / JCM 3761 / NBRC 0622 / NRRL Y-65 / CBS 138) (Yeast).